A 218-amino-acid chain; its full sequence is Hypoxanthine-guanine phosphoribosyltransferase (218 aa).

N-acetylalanine is present on Ala-2. Residue Lys-69 coordinates GMP. The residue at position 103 (Lys-103) is an N6-acetyllysine. Residue Lys-115 forms a Glycyl lysine isopeptide (Lys-Gly) (interchain with G-Cter in SUMO1); alternate linkage. Lys-115 participates in a covalent cross-link: Glycyl lysine isopeptide (Lys-Gly) (interchain with G-Cter in SUMO2); alternate. Residues 134 to 142 (EDIIDTGKT), Lys-166, 186 to 188 (KFV), and Asp-194 contribute to the GMP site. The active-site Proton acceptor is Asp-138. Residue Thr-142 is modified to Phosphothreonine. Asp-194 serves as a coordination point for Mg(2+).

Belongs to the purine/pyrimidine phosphoribosyltransferase family. In terms of assembly, homotetramer. Mg(2+) serves as cofactor.

It is found in the cytoplasm. The enzyme catalyses IMP + diphosphate = hypoxanthine + 5-phospho-alpha-D-ribose 1-diphosphate. It carries out the reaction GMP + diphosphate = guanine + 5-phospho-alpha-D-ribose 1-diphosphate. It functions in the pathway purine metabolism; IMP biosynthesis via salvage pathway; IMP from hypoxanthine: step 1/1. Functionally, converts guanine to guanosine monophosphate, and hypoxanthine to inosine monophosphate. Transfers the 5-phosphoribosyl group from 5-phosphoribosylpyrophosphate onto the purine. Plays a central role in the generation of purine nucleotides through the purine salvage pathway. This Homo sapiens (Human) protein is Hypoxanthine-guanine phosphoribosyltransferase (HPRT1).